Consider the following 155-residue polypeptide: Ribonuclease H (155 aa).

An RNase H type-1 domain is found at 5–146 (LAEVVEIFTD…ADMLANRGVQ (142 aa)). Mg(2+) contacts are provided by Asp14, Glu52, Asp74, and Asp138.

This sequence belongs to the RNase H family. Monomer. Mg(2+) is required as a cofactor.

Its subcellular location is the cytoplasm. The catalysed reaction is Endonucleolytic cleavage to 5'-phosphomonoester.. Its function is as follows. Endonuclease that specifically degrades the RNA of RNA-DNA hybrids. The chain is Ribonuclease H from Nitrosospira multiformis (strain ATCC 25196 / NCIMB 11849 / C 71).